The primary structure comprises 312 residues: Serine/threonine-protein phosphatase PP2A catalytic subunit (312 aa).

The Mn(2+) site is built by aspartate 60, histidine 62, aspartate 88, and asparagine 120. Residue histidine 121 is the Proton donor of the active site. 2 residues coordinate Mn(2+): histidine 170 and histidine 244.

Belongs to the PPP phosphatase family. PP-2A subfamily. Mn(2+) is required as a cofactor.

It is found in the cytoplasm. The enzyme catalyses O-phospho-L-seryl-[protein] + H2O = L-seryl-[protein] + phosphate. It catalyses the reaction O-phospho-L-threonyl-[protein] + H2O = L-threonyl-[protein] + phosphate. This is Serine/threonine-protein phosphatase PP2A catalytic subunit from Nicotiana tabacum (Common tobacco).